A 141-amino-acid polypeptide reads, in one-letter code: Large ribosomal subunit protein uL16 (141 aa).

This sequence belongs to the universal ribosomal protein uL16 family. As to quaternary structure, part of the 50S ribosomal subunit.

Its function is as follows. Binds 23S rRNA and is also seen to make contacts with the A and possibly P site tRNAs. This chain is Large ribosomal subunit protein uL16, found in Hydrogenobaculum sp. (strain Y04AAS1).